A 141-amino-acid chain; its full sequence is UPF0179 protein Cmaq_1008 (141 aa).

The protein belongs to the UPF0179 family.

The protein is UPF0179 protein Cmaq_1008 of Caldivirga maquilingensis (strain ATCC 700844 / DSM 13496 / JCM 10307 / IC-167).